The sequence spans 813 residues: Sodium/hydrogen exchanger 2 (813 aa).

The next 7 membrane-spanning stretches (helical) occupy residues 108–128 (IVPE…IIFG), 139–159 (TDVF…YFMP), 170–190 (IFWY…LSLF), 210–230 (LFGS…FENI), 238–258 (ILVF…YNLF), 279–299 (FFVV…IAAF), and 309–329 (VIEP…AEMF). Asparagine 351 carries N-linked (GlcNAc...) asparagine glycosylation. Helical transmembrane passes span 362–382 (YFMK…MGVS), 393–413 (AFVC…VFVL), 431–451 (FIIA…FLLP), and 460–480 (LFIT…GITI). Residues 649 to 661 (LRKDNSLNRERRA) are compositionally biased toward basic and acidic residues. 2 disordered regions span residues 649 to 709 (LRKD…NLQP) and 736 to 813 (DVGS…NEKP). Polar residues predominate over residues 687-696 (VSNADGNSSD). 2 stretches are compositionally biased toward basic and acidic residues: residues 770–781 (KDQRFGRGREDS) and 797–813 (RASE…NEKP).

It belongs to the monovalent cation:proton antiporter 1 (CPA1) transporter (TC 2.A.36) family. As to quaternary structure, interacts with CHP1 and CHP2. As to expression, predominantly in small intestine, colon, and stomach, with much lower levels in skeletal muscle, kidney, brain, testis, uterus, heart and lung.

Its subcellular location is the apical cell membrane. It carries out the reaction Na(+)(in) + H(+)(out) = Na(+)(out) + H(+)(in). Li(+) activates Na(+)/H(+) exchanger. Its function is as follows. Plasma membrane Na(+)/H(+) antiporter. Mediates the electroneutral exchange of intracellular H(+) ions for extracellular Na(+). Major apical Na(+)/H(+) exchanger in the base of the colonic crypt. Controls in the colonic crypt intracellular pH (pHi) to direct colonic epithelial cell differentiation into the absorptive enterocyte lineage at the expense of the secretory lineage. The chain is Sodium/hydrogen exchanger 2 (Slc9a2) from Rattus norvegicus (Rat).